The chain runs to 120 residues: UPF0342 protein LAF_1331 (120 aa).

The protein belongs to the UPF0342 family.

The polypeptide is UPF0342 protein LAF_1331 (Limosilactobacillus fermentum (strain NBRC 3956 / LMG 18251) (Lactobacillus fermentum)).